We begin with the raw amino-acid sequence, 186 residues long: Outer-membrane lipoprotein LolB (186 aa).

An N-terminal signal peptide occupies residues 1–16 (MRRLAVIASLAWALGG). Cysteine 17 carries the N-palmitoyl cysteine lipid modification. The S-diacylglycerol cysteine moiety is linked to residue cysteine 17.

This sequence belongs to the LolB family. As to quaternary structure, monomer.

The protein localises to the cell outer membrane. Plays a critical role in the incorporation of lipoproteins in the outer membrane after they are released by the LolA protein. This Thiobacillus denitrificans (strain ATCC 25259 / T1) protein is Outer-membrane lipoprotein LolB.